The primary structure comprises 495 residues: Glutamyl-tRNA(Gln) amidotransferase subunit A (495 aa).

Catalysis depends on charge relay system residues Lys-78 and Ser-159. The Acyl-ester intermediate role is filled by Ser-183.

It belongs to the amidase family. GatA subfamily. Heterotrimer of A, B and C subunits.

It catalyses the reaction L-glutamyl-tRNA(Gln) + L-glutamine + ATP + H2O = L-glutaminyl-tRNA(Gln) + L-glutamate + ADP + phosphate + H(+). Allows the formation of correctly charged Gln-tRNA(Gln) through the transamidation of misacylated Glu-tRNA(Gln) in organisms which lack glutaminyl-tRNA synthetase. The reaction takes place in the presence of glutamine and ATP through an activated gamma-phospho-Glu-tRNA(Gln). The chain is Glutamyl-tRNA(Gln) amidotransferase subunit A from Rhizorhabdus wittichii (strain DSM 6014 / CCUG 31198 / JCM 15750 / NBRC 105917 / EY 4224 / RW1) (Sphingomonas wittichii).